We begin with the raw amino-acid sequence, 121 residues long: Small ribosomal subunit protein uS13 (121 aa).

Residues 89-121 (MRHRRGLPVRGQHTKNNARTRKGKAVSIAGKKK) form a disordered region.

This sequence belongs to the universal ribosomal protein uS13 family. In terms of assembly, part of the 30S ribosomal subunit. Forms a loose heterodimer with protein S19. Forms two bridges to the 50S subunit in the 70S ribosome.

Its function is as follows. Located at the top of the head of the 30S subunit, it contacts several helices of the 16S rRNA. In the 70S ribosome it contacts the 23S rRNA (bridge B1a) and protein L5 of the 50S subunit (bridge B1b), connecting the 2 subunits; these bridges are implicated in subunit movement. Contacts the tRNAs in the A and P-sites. The protein is Small ribosomal subunit protein uS13 of Levilactobacillus brevis (strain ATCC 367 / BCRC 12310 / CIP 105137 / JCM 1170 / LMG 11437 / NCIMB 947 / NCTC 947) (Lactobacillus brevis).